A 1902-amino-acid polypeptide reads, in one-letter code: Plexin-B3 (1902 aa).

A signal peptide spans methionine 1 to alanine 34. One can recognise a Sema domain in the interval histidine 35 to valine 461. Residues histidine 35–glutamine 1245 lie on the Extracellular side of the membrane. Asparagine 41 carries an N-linked (GlcNAc...) asparagine glycan. 2 cysteine pairs are disulfide-bonded: cysteine 88–cysteine 97 and cysteine 122–cysteine 130. Residue asparagine 221 is glycosylated (N-linked (GlcNAc...) asparagine). Cystine bridges form between cysteine 257–cysteine 360, cysteine 273–cysteine 305, and cysteine 323–cysteine 347. The tract at residues aspartate 353–arginine 372 is disordered. N-linked (GlcNAc...) asparagine glycans are attached at residues asparagine 416 and asparagine 469. One can recognise a PSI 1 domain in the interval alanine 463–leucine 515. 5 disulfides stabilise this stretch: cysteine 464–cysteine 481, cysteine 470–cysteine 514, cysteine 473–cysteine 490, cysteine 484–cysteine 496, and cysteine 551–cysteine 569. PSI domains are found at residues aspartate 609 to proline 671 and aspartate 776 to proline 822. N-linked (GlcNAc...) asparagine glycosylation is found at asparagine 791, asparagine 889, asparagine 946, asparagine 1090, and asparagine 1207. IPT/TIG domains follow at residues proline 824–tyrosine 913, aspartate 915–threonine 1001, and asparagine 1003–glutamine 1134. The chain crosses the membrane as a helical span at residues valine 1246–tyrosine 1266. The Cytoplasmic segment spans residues arginine 1267–leucine 1902.

This sequence belongs to the plexin family. Binds MET and MST1R. Interacts with RIT2/RIN. Interacts (via cytoplasmic domain) with FSCN1 and RAC1. May form homodimers (via Sema domain). Interacts (via cytoplasmic domain) with ARHGDIA. As to expression, expressed in glioma cells (at protein level). Expressed in glioma cells and oligodendrocyte precursor cells.

The protein resides in the cell membrane. Receptor for SEMA5A that plays a role in axon guidance, invasive growth and cell migration. Stimulates neurite outgrowth and mediates Ca(2+)/Mg(2+)-dependent cell aggregation. In glioma cells, SEMA5A stimulation of PLXNB3 results in the disassembly of F-actin stress fibers, disruption of focal adhesions and cellular collapse as well as inhibition of cell migration and invasion through ARHGDIA-mediated inactivation of RAC1. The sequence is that of Plexin-B3 (Plxnb3) from Rattus norvegicus (Rat).